A 163-amino-acid chain; its full sequence is SDDYVKARVMFKEEQISEFKMAFDMFDEDGGGDISTKELGTIMKRLGMSISREELQQMIDEVDEDASGTIDFEEFLEMMARAMQDSEREIPDDELRAAFRVLDKNGDGFIDKDEFRALASECAGDDLTDDELLEFMMDYDGNRDGRFDYEEWKEIIQELKVRW.

Ser-1 carries the N-acetylserine modification. 4 consecutive EF-hand domains span residues 14 to 49, 50 to 85, 90 to 125, and 127 to 162; these read EQIS…LGMS, ISRE…AMQD, IPDD…CAGD, and LTDD…LKVR. Lys-20 carries the N6,N6-dimethyllysine; alternate modification. Lys-20 carries the N6-methyllysine; alternate modification. Ca(2+) is bound by residues Asp-27, Asp-29, Asp-33, Glu-38, Asp-63, Asp-65, Ser-67, Thr-69, Glu-74, Asp-103, Asn-105, Asp-107, and Glu-114.

It belongs to the troponin C family.

In terms of biological role, troponin is the central regulatory protein of striated muscle contraction. Tn consists of three components: Tn-I which is the inhibitor of actomyosin ATPase, Tn-T which contains the binding site for tropomyosin and Tn-C. The binding of calcium to Tn-C abolishes the inhibitory action of Tn on actin filaments. The sequence is that of Troponin C from Branchiostoma lanceolatum (Common lancelet).